Reading from the N-terminus, the 960-residue chain is Probable RNA-binding protein 19 (960 aa).

One can recognise an RRM 1 domain in the interval Ser2–Ser79. 2 disordered regions span residues Lys85–Lys119 and Trp149–His294. Ser174, Ser176, and Ser180 each carry phosphoserine. Over residues Ser176–Ser194 the composition is skewed to acidic residues. The segment covering Arg273 to Asn286 has biased composition (basic and acidic residues). RRM domains are found at residues His294–Asn369 and Gly402–Ile480. Residue Lys481 forms a Glycyl lysine isopeptide (Lys-Gly) (interchain with G-Cter in SUMO2) linkage. The segment at Leu491–Asn513 is disordered. One can recognise an RRM 4 domain in the interval Thr587–Val659. The disordered stretch occupies residues Pro667–Gly729. Composition is skewed to acidic residues over residues Thr689–Ala706 and Glu714–Ser726. RRM domains lie at Cys730–Arg811 and Ser832–Ser912. 3 positions are modified to phosphoserine: Ser936, Ser949, and Ser951.

This sequence belongs to the RRM MRD1 family. In terms of tissue distribution, expressed in the crypts of Lieberkuhn of the intestine and in intestinal neoplasia (at protein level).

It localises to the nucleus. The protein localises to the nucleolus. The protein resides in the nucleoplasm. Its subcellular location is the cytoplasm. It is found in the chromosome. Functionally, plays a role in embryo pre-implantation development. This chain is Probable RNA-binding protein 19 (RBM19), found in Homo sapiens (Human).